The following is a 452-amino-acid chain: Lipase member H (452 aa).

Positions 1–16 (MLRFYLFISLLCLVRS) are cleaved as a signal peptide. N-linked (GlcNAc...) asparagine glycosylation is found at Asn50, Asn66, and Asn122. Ser154 (nucleophile) is an active-site residue. Asp178 (charge relay system) is an active-site residue. Cys233 and Cys247 are oxidised to a cystine. The active-site Charge relay system is the His249. A glycan (N-linked (GlcNAc...) asparagine) is linked at Asn263. Cystine bridges form between Cys271/Cys282, Cys285/Cys293, and Cys428/Cys447.

This sequence belongs to the AB hydrolase superfamily. Lipase family. As to quaternary structure, interacts with TTMP/C3orf52. Expressed in liver and lacrimal gland.

It localises to the secreted. The protein localises to the cell membrane. The catalysed reaction is 1-hexadecanoyl-2-(9Z-octadecenoyl)-sn-glycero-3-phosphate + H2O = 2-(9Z-octadecenoyl)-sn-glycero-3-phosphate + hexadecanoate + H(+). Its function is as follows. Hydrolyzes specifically phosphatidic acid (PA) to produce 2-acyl lysophosphatidic acid (LPA; a potent bioactive lipid mediator) and fatty acid. Does not hydrolyze other phospholipids, like phosphatidylserine (PS), phosphatidylcholine (PC) and phosphatidylethanolamine (PE) or triacylglycerol (TG). The sequence is that of Lipase member H (LIPH) from Oryctolagus cuniculus (Rabbit).